The chain runs to 257 residues: Ribosomal RNA small subunit methyltransferase J (257 aa).

S-adenosyl-L-methionine-binding positions include 107–108, 123–124, and aspartate 177; these read RD and ER.

Belongs to the methyltransferase superfamily. RsmJ family.

It is found in the cytoplasm. The catalysed reaction is guanosine(1516) in 16S rRNA + S-adenosyl-L-methionine = N(2)-methylguanosine(1516) in 16S rRNA + S-adenosyl-L-homocysteine + H(+). In terms of biological role, specifically methylates the guanosine in position 1516 of 16S rRNA. In Haemophilus influenzae (strain ATCC 51907 / DSM 11121 / KW20 / Rd), this protein is Ribosomal RNA small subunit methyltransferase J.